The sequence spans 346 residues: Holliday junction branch migration complex subunit RuvB (346 aa).

The large ATPase domain (RuvB-L) stretch occupies residues 1 to 181; sequence MSDRNPLIDA…FGIPVRLNFY (181 aa). ATP-binding positions include leucine 20, arginine 21, glycine 62, lysine 65, threonine 66, threonine 67, 128-130, arginine 171, tyrosine 181, and arginine 218; that span reads EDF. Position 66 (threonine 66) interacts with Mg(2+). The interval 182–252 is small ATPAse domain (RuvB-S); the sequence is TVEELEYIVR…IADEALSRLE (71 aa). The interval 255–346 is head domain (RuvB-H); it reads NRGLDQLDRR…SQYGLFMEDE (92 aa). DNA contacts are provided by arginine 291, arginine 310, and arginine 315.

This sequence belongs to the RuvB family. As to quaternary structure, homohexamer. Forms an RuvA(8)-RuvB(12)-Holliday junction (HJ) complex. HJ DNA is sandwiched between 2 RuvA tetramers; dsDNA enters through RuvA and exits via RuvB. An RuvB hexamer assembles on each DNA strand where it exits the tetramer. Each RuvB hexamer is contacted by two RuvA subunits (via domain III) on 2 adjacent RuvB subunits; this complex drives branch migration. In the full resolvosome a probable DNA-RuvA(4)-RuvB(12)-RuvC(2) complex forms which resolves the HJ.

It is found in the cytoplasm. It carries out the reaction ATP + H2O = ADP + phosphate + H(+). Functionally, the RuvA-RuvB-RuvC complex processes Holliday junction (HJ) DNA during genetic recombination and DNA repair, while the RuvA-RuvB complex plays an important role in the rescue of blocked DNA replication forks via replication fork reversal (RFR). RuvA specifically binds to HJ cruciform DNA, conferring on it an open structure. The RuvB hexamer acts as an ATP-dependent pump, pulling dsDNA into and through the RuvAB complex. RuvB forms 2 homohexamers on either side of HJ DNA bound by 1 or 2 RuvA tetramers; 4 subunits per hexamer contact DNA at a time. Coordinated motions by a converter formed by DNA-disengaged RuvB subunits stimulates ATP hydrolysis and nucleotide exchange. Immobilization of the converter enables RuvB to convert the ATP-contained energy into a lever motion, pulling 2 nucleotides of DNA out of the RuvA tetramer per ATP hydrolyzed, thus driving DNA branch migration. The RuvB motors rotate together with the DNA substrate, which together with the progressing nucleotide cycle form the mechanistic basis for DNA recombination by continuous HJ branch migration. Branch migration allows RuvC to scan DNA until it finds its consensus sequence, where it cleaves and resolves cruciform DNA. The protein is Holliday junction branch migration complex subunit RuvB of Brucella melitensis biotype 2 (strain ATCC 23457).